A 142-amino-acid polypeptide reads, in one-letter code: Transcriptional regulator MraZ (142 aa).

SpoVT-AbrB domains lie at 5–51 (ASAL…PRPE) and 77–120 (AMDV…DSQT).

It belongs to the MraZ family. Forms oligomers.

The protein localises to the cytoplasm. It is found in the nucleoid. The protein is Transcriptional regulator MraZ of Burkholderia ambifaria (strain MC40-6).